We begin with the raw amino-acid sequence, 109 residues long: uncharacterized protein (109 aa).

The chain crosses the membrane as a helical span at residues 26-48; that stretch reads VTSIMTVSDINYLLLYLIILLTL.

The protein resides in the membrane. This is an uncharacterized protein from Saccharomyces cerevisiae (strain ATCC 204508 / S288c) (Baker's yeast).